A 117-amino-acid chain; its full sequence is Large ribosomal subunit protein bL20 (117 aa).

The protein belongs to the bacterial ribosomal protein bL20 family.

Binds directly to 23S ribosomal RNA and is necessary for the in vitro assembly process of the 50S ribosomal subunit. It is not involved in the protein synthesizing functions of that subunit. The protein is Large ribosomal subunit protein bL20 of Maridesulfovibrio salexigens (strain ATCC 14822 / DSM 2638 / NCIMB 8403 / VKM B-1763) (Desulfovibrio salexigens).